The primary structure comprises 352 residues: Protein-glutamate methylesterase/protein-glutamine glutaminase 2 (352 aa).

Residues M1–E116 form the Response regulatory domain. 4-aspartylphosphate is present on D50. The 191-residue stretch at A162 to Q352 folds into the CheB-type methylesterase domain. Active-site residues include S174, H200, and D296.

This sequence belongs to the CheB family. In terms of processing, phosphorylated by CheA. Phosphorylation of the N-terminal regulatory domain activates the methylesterase activity.

It localises to the cytoplasm. It catalyses the reaction [protein]-L-glutamate 5-O-methyl ester + H2O = L-glutamyl-[protein] + methanol + H(+). It carries out the reaction L-glutaminyl-[protein] + H2O = L-glutamyl-[protein] + NH4(+). Functionally, involved in chemotaxis. Part of a chemotaxis signal transduction system that modulates chemotaxis in response to various stimuli. Catalyzes the demethylation of specific methylglutamate residues introduced into the chemoreceptors (methyl-accepting chemotaxis proteins or MCP) by CheR. Also mediates the irreversible deamidation of specific glutamine residues to glutamic acid. This chain is Protein-glutamate methylesterase/protein-glutamine glutaminase 2, found in Xanthomonas campestris pv. campestris (strain ATCC 33913 / DSM 3586 / NCPPB 528 / LMG 568 / P 25).